Here is a 363-residue protein sequence, read N- to C-terminus: Cyclin-D1-1 (363 aa).

A disordered region spans residues 39 to 77; it reads ELEREGEPAQGSSPSSSLSCAAAAAAAADDDDEDEDEHG. The segment covering 50–65 has biased composition (low complexity); that stretch reads SSPSSSLSCAAAAAAA. Residues 66–75 show a composition bias toward acidic residues; sequence ADDDDEDEDE.

This sequence belongs to the cyclin family. Cyclin D subfamily.

The chain is Cyclin-D1-1 (CYCD1-1) from Oryza sativa subsp. japonica (Rice).